We begin with the raw amino-acid sequence, 98 residues long: MARPKKCRQLSSCVPCSLFKPNGIPSVELTHIQLEADEFEALELGDVQRLSQLDAAALMGISRQTFGYLLASARKKVATAITQGEVLRLPSKTDKDLS.

This sequence belongs to the UPF0251 family.

This chain is UPF0251 protein Sputw3181_3483, found in Shewanella sp. (strain W3-18-1).